The following is a 209-amino-acid chain: Mitochondrial import inner membrane translocase subunit Tim23 (209 aa).

Transmembrane regions (helical) follow at residues 73-93 (FELA…FGAL), 125-145 (ALWA…GVII), and 181-197 (GLAG…YNNW).

The protein belongs to the Tim17/Tim22/Tim23 family. Component of the TIM23 complex at least composed of TIMM23, TIMM17 (TIMM17A or TIMM17B) and TIMM50; within this complex, directly interacts with TIMM50. The complex interacts with the TIMM44 component of the PAM complex and with DNAJC15. Upon mitochondrial depolarization, interacts with PINK1; the interaction is required for PINK1 accumulation at the outer mitochondrial membrane, kinase activation by autophosphorylation and PRKN recruitement to mitochondria.

The protein localises to the mitochondrion inner membrane. In terms of biological role, essential component of the TIM23 complex, a complex that mediates the translocation of transit peptide-containing proteins across the mitochondrial inner membrane. Has a role in the activation of stress-induced mitophagy by protecting PINK1 from OMA1-mediated degradation and facilitating its accumulation at the outer mitochondrial membrane in response to depolarization. The sequence is that of Mitochondrial import inner membrane translocase subunit Tim23 (Timm23) from Rattus norvegicus (Rat).